A 345-amino-acid chain; its full sequence is Isopentenyl-diphosphate delta-isomerase (345 aa).

6–7 (RK) serves as a coordination point for substrate. Residues 63-65 (SMT), serine 93, and asparagine 122 each bind FMN. Residue 93-95 (SQR) participates in substrate binding. Glutamine 156 serves as a coordination point for substrate. A Mg(2+)-binding site is contributed by glutamate 157. FMN-binding positions include lysine 188, threonine 218, 265–267 (GLR), and 286–287 (AL).

It belongs to the IPP isomerase type 2 family. Homooctamer. Dimer of tetramers. Requires FMN as cofactor. The cofactor is NADPH. It depends on Mg(2+) as a cofactor.

The protein localises to the cytoplasm. The catalysed reaction is isopentenyl diphosphate = dimethylallyl diphosphate. Functionally, involved in the biosynthesis of isoprenoids. Catalyzes the 1,3-allylic rearrangement of the homoallylic substrate isopentenyl (IPP) to its allylic isomer, dimethylallyl diphosphate (DMAPP). This Archaeoglobus fulgidus (strain ATCC 49558 / DSM 4304 / JCM 9628 / NBRC 100126 / VC-16) protein is Isopentenyl-diphosphate delta-isomerase.